A 534-amino-acid polypeptide reads, in one-letter code: Fusion glycoprotein F0 (534 aa).

The signal sequence occupies residues 1-23 (MGLRVNVSAIFMAVLLTLQTPTG). At 24 to 487 (QIHWGNLSKI…ESSDQILRSM (464 aa)) the chain is on the extracellular side. N-linked (GlcNAc...) asparagine; by host glycans are attached at residues Asn-29, Asn-61, and Asn-67. The interval 69 to 95 (TRVEIAEYRRLLRTVLEPIRDALNAMT) is HRC. A fusion peptide region spans residues 113 to 138 (FAGVVLAGAALGVATAAQITAGIALH). A coiled-coil region spans residues 138–166 (HQSMLNSQAIDNLRASLETTNQAIEAIRQ). The segment at 139–215 (QSMLNSQAID…LLRYYTEILS (77 aa)) is HRA. Cystine bridges form between Cys-334–Cys-343, Cys-358–Cys-366, Cys-390–Cys-395, and Cys-397–Cys-420. An interaction with hemagglutinin region spans residues 367-444 (ARTLVSGSFG…RRYPDAVYLH (78 aa)). Positions 445 to 494 (RIDLGPPISLERLDVGTSLGSAIAKLEDAKELLESSDQILRSMKGLSSTS) are HRB. The stretch at 462–487 (SLGSAIAKLEDAKELLESSDQILRSM) forms a coiled coil. The chain crosses the membrane as a helical span at residues 488–518 (KGLSSTSIVYILIAVCLGGLIGIPALICCCR). The Cytoplasmic segment spans residues 519–534 (GRCNKRENKLVCQDQA).

Belongs to the paramyxoviruses fusion glycoprotein family. In terms of assembly, homotrimer of disulfide-linked F1-F2. In terms of processing, the inactive precursor F0 is glycosylated and proteolytically cleaved into F1 and F2 to be functionally active. The cleavage is mediated by host furin during the transport and maturation of the polypeptide.

The protein resides in the virion membrane. It localises to the host cell membrane. Functionally, class I viral fusion protein. Under the current model, the protein has at least 3 conformational states: pre-fusion native state, pre-hairpin intermediate state, and post-fusion hairpin state. During viral and plasma cell membrane fusion, the heptad repeat (HR) regions assume a trimer-of-hairpins structure, positioning the fusion peptide in close proximity to the C-terminal region of the ectodomain. The formation of this structure appears to drive apposition and subsequent fusion of viral and plasma cell membranes. Directs fusion of viral and cellular membranes leading to delivery of the nucleocapsid into the cytoplasm. This fusion is pH independent and occurs directly at the outer cell membrane. During viral entry or virus-mediated fusion between infected cells and neighboring susceptible cells, the head domain of the H protein initially binds to its receptor and then the stalk region of the H protein transmits the fusion-triggering signal to the F protein. Upon HN binding to its cellular receptor, the hydrophobic fusion peptide is unmasked and interacts with the cellular membrane, inducing the fusion between cell and virion membranes. Later in infection, F proteins expressed at the plasma membrane of infected cells could mediate fusion with adjacent cells to form syncytia, a cytopathic effect that could lead to tissue necrosis. In terms of biological role, some hyperfusogenic isolates can induce membrane fusion in SLAM- and nectin-4-negative cells and are linked to fatal subacute sclerosing panencephalitis (SSPE) or measles inclusion body encephalitis (MIBE). The neuropathogenicity is closely associated with enhanced propagation mediated by cell-to-cell fusion in the brain, which is principally regulated by hyperfusogenic mutations of the viral F protein. Cell-to-cell transmission of the virus also occurs with hyperfusogenic isolates. This chain is Fusion glycoprotein F0 (F), found in Measles virus (strain Yamagata-1) (MeV).